The primary structure comprises 816 residues: Leucine--tRNA ligase (816 aa).

Residues 42-52 (PYPSGSLHMGH) carry the 'HIGH' region motif. The short motif at 574–578 (KMSKS) is the 'KMSKS' region element. Lys-577 provides a ligand contact to ATP.

This sequence belongs to the class-I aminoacyl-tRNA synthetase family.

Its subcellular location is the cytoplasm. The catalysed reaction is tRNA(Leu) + L-leucine + ATP = L-leucyl-tRNA(Leu) + AMP + diphosphate. The chain is Leucine--tRNA ligase from Ruthia magnifica subsp. Calyptogena magnifica.